Here is a 90-residue protein sequence, read N- to C-terminus: Probable Fe(2+)-trafficking protein (90 aa).

The protein belongs to the Fe(2+)-trafficking protein family.

In terms of biological role, could be a mediator in iron transactions between iron acquisition and iron-requiring processes, such as synthesis and/or repair of Fe-S clusters in biosynthetic enzymes. This Nitrosomonas europaea (strain ATCC 19718 / CIP 103999 / KCTC 2705 / NBRC 14298) protein is Probable Fe(2+)-trafficking protein.